The following is a 463-amino-acid chain: Cysteine--tRNA ligase (463 aa).

Residue C33 coordinates Zn(2+). The short motif at 35–45 (PTVYDFAHIGN) is the 'HIGH' region element. Zn(2+)-binding residues include C221, H246, and E250. The 'KMSKS' region signature appears at 279 to 283 (KMSKS). An ATP-binding site is contributed by K282.

Belongs to the class-I aminoacyl-tRNA synthetase family. As to quaternary structure, monomer. The cofactor is Zn(2+).

It localises to the cytoplasm. It catalyses the reaction tRNA(Cys) + L-cysteine + ATP = L-cysteinyl-tRNA(Cys) + AMP + diphosphate. This Rhizobium rhizogenes (strain K84 / ATCC BAA-868) (Agrobacterium radiobacter) protein is Cysteine--tRNA ligase.